We begin with the raw amino-acid sequence, 302 residues long: uncharacterized protein (302 aa).

Glu-47 is a catalytic residue.

The protein belongs to the PhzF family.

This is an uncharacterized protein from Mesorhizobium japonicum (strain LMG 29417 / CECT 9101 / MAFF 303099) (Mesorhizobium loti (strain MAFF 303099)).